The chain runs to 497 residues: Subtilisin-like protease CPC735_031240 (497 aa).

The N-terminal stretch at 1 to 16 (MKGVLSLSLLPLLAAP) is a signal peptide. Positions 17–136 (SPILVDTIHR…IEKDSEVHAW (120 aa)) are excised as a propeptide. One can recognise an Inhibitor I9 domain in the interval 43–134 (SYIVVFKKNV…QYIEKDSEVH (92 aa)). Residues 146-452 (PWGLARVSHR…GGSSNYTAII (307 aa)) enclose the Peptidase S8 domain. Residues D182 and H214 each act as charge relay system in the active site. N-linked (GlcNAc...) asparagine glycosylation is found at N244 and N284. The Charge relay system role is filled by S380. A glycan (N-linked (GlcNAc...) asparagine) is linked at N447.

It belongs to the peptidase S8 family.

Its subcellular location is the secreted. Secreted subtilisin-like serine protease with keratinolytic activity that contributes to pathogenicity. This is Subtilisin-like protease CPC735_031240 from Coccidioides posadasii (strain C735) (Valley fever fungus).